A 204-amino-acid chain; its full sequence is Guanylate kinase (204 aa).

Residues 18-198 (GKLIIFSAPS…AKAETLEVIK (181 aa)) enclose the Guanylate kinase-like domain. 25–32 (APSGSGKS) serves as a coordination point for ATP.

This sequence belongs to the guanylate kinase family.

Its subcellular location is the cytoplasm. It catalyses the reaction GMP + ATP = GDP + ADP. Functionally, essential for recycling GMP and indirectly, cGMP. The chain is Guanylate kinase from Bacteroides thetaiotaomicron (strain ATCC 29148 / DSM 2079 / JCM 5827 / CCUG 10774 / NCTC 10582 / VPI-5482 / E50).